Reading from the N-terminus, the 140-residue chain is ATP synthase epsilon chain 1 (140 aa).

This sequence belongs to the ATPase epsilon chain family. In terms of assembly, F-type ATPases have 2 components, CF(1) - the catalytic core - and CF(0) - the membrane proton channel. CF(1) has five subunits: alpha(3), beta(3), gamma(1), delta(1), epsilon(1). CF(0) has three main subunits: a, b and c.

The protein resides in the cell inner membrane. Functionally, produces ATP from ADP in the presence of a proton gradient across the membrane. In Photobacterium profundum (strain SS9), this protein is ATP synthase epsilon chain 1.